The sequence spans 206 residues: Small ribosomal subunit protein uS4 (206 aa).

The tract at residues 15–46 (MGENIWGRPKSPVNKREYGPGQHGQRRKNKLS) is disordered. One can recognise an S4 RNA-binding domain in the interval 94–154 (RRLDAIVYRA…EKSRQLALVL (61 aa)).

Belongs to the universal ribosomal protein uS4 family. As to quaternary structure, part of the 30S ribosomal subunit. Contacts protein S5. The interaction surface between S4 and S5 is involved in control of translational fidelity.

Its function is as follows. One of the primary rRNA binding proteins, it binds directly to 16S rRNA where it nucleates assembly of the body of the 30S subunit. Functionally, with S5 and S12 plays an important role in translational accuracy. This Cereibacter sphaeroides (strain ATCC 17029 / ATH 2.4.9) (Rhodobacter sphaeroides) protein is Small ribosomal subunit protein uS4.